Here is a 154-residue protein sequence, read N- to C-terminus: Large ribosomal subunit protein uL13 (154 aa).

The segment at 132 to 154 (PHEAQQPEVLDVKSMNAKNTRSA) is disordered.

This sequence belongs to the universal ribosomal protein uL13 family. As to quaternary structure, part of the 50S ribosomal subunit.

Its function is as follows. This protein is one of the early assembly proteins of the 50S ribosomal subunit, although it is not seen to bind rRNA by itself. It is important during the early stages of 50S assembly. The chain is Large ribosomal subunit protein uL13 from Paracoccus denitrificans (strain Pd 1222).